A 629-amino-acid polypeptide reads, in one-letter code: Ras GTPase-activating protein gap-1 (629 aa).

A Ras-GAP domain is found at 183–398 (DRIRPVLSSL…SVMASFLDNI (216 aa)). In terms of domain architecture, PH spans 411–507 (TVFKFGNLQQ…WLNAIERQRN (97 aa)).

It localises to the cytoplasm. Functionally, GTPase-activating protein, which inhibits the vulval induction by acting as a negative regulator for the member of the Ras family let-60. Probably decreases the signaling activity of Ras by stimulating its intrinsic GTPase activity, thereby lowering the levels of GTP-bound, active Ras. The chain is Ras GTPase-activating protein gap-1 (gap-1) from Caenorhabditis elegans.